The sequence spans 134 residues: Methylglyoxal synthase (134 aa).

Residues 1 to 134 form the MGS-like domain; it reads MHIALIAHDE…DWRDLRRNDE (134 aa). Substrate contacts are provided by residues histidine 8, lysine 12, 34-37, and 54-55; these read TGTT and SG. Catalysis depends on aspartate 60, which acts as the Proton donor/acceptor. Histidine 87 provides a ligand contact to substrate.

It belongs to the methylglyoxal synthase family.

It carries out the reaction dihydroxyacetone phosphate = methylglyoxal + phosphate. Functionally, catalyzes the formation of methylglyoxal from dihydroxyacetone phosphate. The protein is Methylglyoxal synthase of Listeria innocua serovar 6a (strain ATCC BAA-680 / CLIP 11262).